The following is a 214-amino-acid chain: Holliday junction branch migration complex subunit RuvA (214 aa).

Residues Met-1–Pro-63 form a domain I region. Positions Gly-64–Arg-139 are domain II. The segment at Arg-139–Ser-143 is flexible linker. Positions Ala-144–Arg-214 are domain III.

It belongs to the RuvA family. In terms of assembly, homotetramer. Forms an RuvA(8)-RuvB(12)-Holliday junction (HJ) complex. HJ DNA is sandwiched between 2 RuvA tetramers; dsDNA enters through RuvA and exits via RuvB. An RuvB hexamer assembles on each DNA strand where it exits the tetramer. Each RuvB hexamer is contacted by two RuvA subunits (via domain III) on 2 adjacent RuvB subunits; this complex drives branch migration. In the full resolvosome a probable DNA-RuvA(4)-RuvB(12)-RuvC(2) complex forms which resolves the HJ.

The protein resides in the cytoplasm. The RuvA-RuvB-RuvC complex processes Holliday junction (HJ) DNA during genetic recombination and DNA repair, while the RuvA-RuvB complex plays an important role in the rescue of blocked DNA replication forks via replication fork reversal (RFR). RuvA specifically binds to HJ cruciform DNA, conferring on it an open structure. The RuvB hexamer acts as an ATP-dependent pump, pulling dsDNA into and through the RuvAB complex. HJ branch migration allows RuvC to scan DNA until it finds its consensus sequence, where it cleaves and resolves the cruciform DNA. The sequence is that of Holliday junction branch migration complex subunit RuvA from Clavibacter michiganensis subsp. michiganensis (strain NCPPB 382).